The following is a 385-amino-acid chain: MAKRDYYEVLGVAKNASDEDLKKAYRKLAMKYHPDRNPDSKEAEEKFKEAKEAYEVLGDEQKRAAYDRYGHAGVDPNAAGMGGGMGGGMGGGMGGGMGGGFADAFGDIFGEIFGAGRRGGGGPQVYRGADLKYALEITLEQAASGFDTEIRVPSWENCDTCHGSGAKAGTSPKTCRTCGGSGAVRMQQGFFSVQQTCPTCHGTGKEITDPCPSCDGVGRTRRNKTLQVKIPAGIDDGMRIRSSGNGEPGINGGPPGDLYVEIHIKQHKIFQRDGDDLHCELTIPFTTAALGGELQVPTLGGKAEISIPEGTQSGKTFRLRAKGIRGVRGSYPGDLYCHVVVETPVRLSDEQKAILRQFEASLNDGGDRHSPQSKSWTDRVKEFFS.

Positions 5–70 (DYYEVLGVAK…QKRAAYDRYG (66 aa)) constitute a J domain. A CR-type zinc finger spans residues 145–223 (GFDTEIRVPS…CDGVGRTRRN (79 aa)). Residues Cys158, Cys161, Cys175, Cys178, Cys197, Cys200, Cys211, and Cys214 each coordinate Zn(2+). CXXCXGXG motif repeat units lie at residues 158 to 165 (CDTCHGSG), 175 to 182 (CRTCGGSG), 197 to 204 (CPTCHGTG), and 211 to 218 (CPSCDGVG).

The protein belongs to the DnaJ family. In terms of assembly, homodimer. Requires Zn(2+) as cofactor.

Its subcellular location is the cytoplasm. In terms of biological role, participates actively in the response to hyperosmotic and heat shock by preventing the aggregation of stress-denatured proteins and by disaggregating proteins, also in an autonomous, DnaK-independent fashion. Unfolded proteins bind initially to DnaJ; upon interaction with the DnaJ-bound protein, DnaK hydrolyzes its bound ATP, resulting in the formation of a stable complex. GrpE releases ADP from DnaK; ATP binding to DnaK triggers the release of the substrate protein, thus completing the reaction cycle. Several rounds of ATP-dependent interactions between DnaJ, DnaK and GrpE are required for fully efficient folding. Also involved, together with DnaK and GrpE, in the DNA replication of plasmids through activation of initiation proteins. The chain is Chaperone protein DnaJ from Bordetella pertussis (strain Tohama I / ATCC BAA-589 / NCTC 13251).